Here is a 276-residue protein sequence, read N- to C-terminus: Transcriptional antiactivator ExsD (276 aa).

Can form homotrimer. Interacts with ExsA; this interaction inhibits ExsA activity. Interacts with ExsC; this interaction dissociates the ExsD-ExsA complex.

In terms of biological role, negative regulator of the type III secretion system regulon. Acts by disrupting transcriptional activator ExsA self-association and DNA-binding activity in absence of inducing signals. Upon host cell contact, this interaction is disrupted by the anti-antiactivator protein ExsC leading to ExsA activation. The sequence is that of Transcriptional antiactivator ExsD (exsD) from Pseudomonas aeruginosa (strain ATCC 15692 / DSM 22644 / CIP 104116 / JCM 14847 / LMG 12228 / 1C / PRS 101 / PAO1).